The primary structure comprises 208 residues: Microcin J25-processing protein McjB (208 aa).

It localises to the cytoplasm. Its function is as follows. Along with McjC, necessary and sufficient to process the inactive microcin J25 (McjA) precursor into the active peptide. The chain is Microcin J25-processing protein McjB (mcjB) from Escherichia coli.